A 143-amino-acid polypeptide reads, in one-letter code: Transmembrane protein 80 (143 aa).

The next 4 membrane-spanning stretches (helical) occupy residues 21–41, 55–75, 99–119, and 121–141; these read MLFY…LLMI, LVLD…RLYL, ALLS…DWAL, and ATLL…IAAF.

The protein resides in the membrane. Its subcellular location is the cell projection. It is found in the cilium. This Homo sapiens (Human) protein is Transmembrane protein 80.